The sequence spans 430 residues: Serine--tRNA ligase (430 aa).

237 to 239 (TAE) contributes to the L-serine binding site. 268-270 (RRE) contributes to the ATP binding site. An L-serine-binding site is contributed by Glu-291. 355–358 (EISS) contacts ATP. Ser-391 is a binding site for L-serine.

This sequence belongs to the class-II aminoacyl-tRNA synthetase family. Type-1 seryl-tRNA synthetase subfamily. Homodimer. The tRNA molecule binds across the dimer.

Its subcellular location is the cytoplasm. It catalyses the reaction tRNA(Ser) + L-serine + ATP = L-seryl-tRNA(Ser) + AMP + diphosphate + H(+). It carries out the reaction tRNA(Sec) + L-serine + ATP = L-seryl-tRNA(Sec) + AMP + diphosphate + H(+). It functions in the pathway aminoacyl-tRNA biosynthesis; selenocysteinyl-tRNA(Sec) biosynthesis; L-seryl-tRNA(Sec) from L-serine and tRNA(Sec): step 1/1. Functionally, catalyzes the attachment of serine to tRNA(Ser). Is also able to aminoacylate tRNA(Sec) with serine, to form the misacylated tRNA L-seryl-tRNA(Sec), which will be further converted into selenocysteinyl-tRNA(Sec). The chain is Serine--tRNA ligase from Magnetococcus marinus (strain ATCC BAA-1437 / JCM 17883 / MC-1).